Reading from the N-terminus, the 453-residue chain is Formimidoylglutamate deiminase (453 aa).

Residues histidine 56 and histidine 58 each contribute to the Zn(2+) site. Positions 61, 82, 121, 206, and 209 each coordinate N-formimidoyl-L-glutamate. A Zn(2+)-binding site is contributed by histidine 232. Glutamate 235 provides a ligand contact to N-formimidoyl-L-glutamate. Active-site proton acceptor residues include histidine 269 and aspartate 320. Residue aspartate 320 participates in Zn(2+) binding.

This sequence belongs to the metallo-dependent hydrolases superfamily. As to quaternary structure, homodimer. Zn(2+) serves as cofactor.

The enzyme catalyses N-formimidoyl-L-glutamate + H2O = N-formyl-L-glutamate + NH4(+). The protein operates within amino-acid degradation; L-histidine degradation into L-glutamate; L-glutamate from N-formimidoyl-L-glutamate (deiminase route): step 1/2. Inhibited by the metal chelator dipicolinate. Inhibited by N-formimino-L-aspartate and N-guanidino-L-glutaric acid. Catalyzes the hydrolysis of N-formimino-L-glutamate to N-formyl-L-glutamate and ammonia. In Pseudomonas aeruginosa (strain ATCC 15692 / DSM 22644 / CIP 104116 / JCM 14847 / LMG 12228 / 1C / PRS 101 / PAO1), this protein is Formimidoylglutamate deiminase.